Consider the following 486-residue polypeptide: Glutamate--tRNA ligase 1 (486 aa).

Residues 9-19 (PSPTGMLHIGG) carry the 'HIGH' region motif. The short motif at 259–263 (KLSKR) is the 'KMSKS' region element. Residue lysine 262 coordinates ATP.

Belongs to the class-I aminoacyl-tRNA synthetase family. Glutamate--tRNA ligase type 1 subfamily. As to quaternary structure, monomer.

The protein localises to the cytoplasm. It carries out the reaction tRNA(Glu) + L-glutamate + ATP = L-glutamyl-tRNA(Glu) + AMP + diphosphate. Its function is as follows. Catalyzes the attachment of glutamate to tRNA(Glu) in a two-step reaction: glutamate is first activated by ATP to form Glu-AMP and then transferred to the acceptor end of tRNA(Glu). The protein is Glutamate--tRNA ligase 1 of Hyphomonas neptunium (strain ATCC 15444).